Reading from the N-terminus, the 268-residue chain is MKRVVLLLAYQGTAYAGWQRQPNDLSIQEVIESALARVLGKPIVVSSSGRTDSGVHAYGQVAHFSQPDHPLFSQPQSIKKMLNAILPKDIVIRDVVLSDVNFHARFSAIAKEYRYSLTRSPKPLPWQRYFAYYPRHSIKIDLMQKGAKYLLGTHDFASFANHGRDYTSTERTLFKLDIIDNEEIVTIICKGNGFLYKMVRNIVGSLLDISKEKYPPEYIQEILAQKSRRKGPPAAPSHALSLHHVCYPKPYNWFCTPECDINSLKEEK.

Asp52 serves as the catalytic Nucleophile. Substrate is bound at residue Tyr113.

Belongs to the tRNA pseudouridine synthase TruA family. Homodimer.

The enzyme catalyses uridine(38/39/40) in tRNA = pseudouridine(38/39/40) in tRNA. Formation of pseudouridine at positions 38, 39 and 40 in the anticodon stem and loop of transfer RNAs. This Chlamydia felis (strain Fe/C-56) (Chlamydophila felis) protein is tRNA pseudouridine synthase A.